Here is a 417-residue protein sequence, read N- to C-terminus: Solute carrier family 25 member 46-A (417 aa).

Residues 1–13 (MQPRRPDRFDGLE) show a composition bias toward basic and acidic residues. A disordered region spans residues 1–90 (MQPRRPDRFD…AFGEENSNSA (90 aa)). Positions 31–41 (SSFPARSFSSS) are enriched in low complexity. The Solcar 1 repeat unit spans residues 95–186 (QLNRFAGFGI…GILSEFTHLP (92 aa)). 6 helical membrane passes run 102-122 (FGIG…CIVL), 162-182 (MGST…LSEF), 198-218 (IGGH…FYSA), 257-277 (LLPL…HYIV), 313-333 (FPEL…LYPL), and 382-402 (LGFY…AIVL). The Solcar 2 repeat unit spans residues 310 to 415 (EDYFPELIAN…KIIYSSVVQT (106 aa)).

Belongs to the mitochondrial carrier (TC 2.A.29) family.

Its subcellular location is the mitochondrion outer membrane. May play a role in mitochondrial dynamics by controlling mitochondrial membrane fission. This chain is Solute carrier family 25 member 46-A (slc25a46-a), found in Xenopus laevis (African clawed frog).